The following is a 289-amino-acid chain: G1/S-specific cyclin-D2 (289 aa).

Residues 26–151 (VLQNLLTIEE…VVLGKLKWNL (126 aa)) form the Cyclin N-terminal domain. Residues 264–289 (DQGDGSKSEDELDQASTPTDVRDIDL) are disordered. Ser271 is modified (phosphoserine). Thr280 is modified (phosphothreonine).

It belongs to the cyclin family. Cyclin D subfamily. In terms of assembly, interacts with either CDK4 or CDK6 protein kinase to form a serine/threonine kinase holoenzyme complex. The cyclin subunit imparts substrate specificity to the complex. Post-translationally, phosphorylation at Thr-280 by MAP kinases is required for ubiquitination and degradation by the DCX(AMBRA1) complex. Ubiquitinated by the DCX(AMBRA1) complex during the transition from G1 to S cell phase, leading to its degradation: ubiquitination is dependent on Thr-280 phosphorylation. The DCX(AMBRA1) complex represents the major regulator of CCND2 stability during the G1/S transition. Polyubiquitinated by the SCF(FBXL2) complex, leading to proteasomal degradation.

Its subcellular location is the nucleus. It is found in the cytoplasm. It localises to the nucleus membrane. Regulatory component of the cyclin D2-CDK4 (DC) complex that phosphorylates and inhibits members of the retinoblastoma (RB) protein family including RB1 and regulates the cell-cycle during G(1)/S transition. Phosphorylation of RB1 allows dissociation of the transcription factor E2F from the RB/E2F complex and the subsequent transcription of E2F target genes which are responsible for the progression through the G(1) phase. Hypophosphorylates RB1 in early G(1) phase. Cyclin D-CDK4 complexes are major integrators of various mitogenenic and antimitogenic signals. The polypeptide is G1/S-specific cyclin-D2 (CCND2) (Bos taurus (Bovine)).